The sequence spans 564 residues: Transmembrane anterior posterior transformation protein 1 (564 aa).

Positions 1–10 are enriched in low complexity; it reads MAGVCDAAAP. The interval 1 to 55 is disordered; sequence MAGVCDAAAPGEGGGGGADGPERTGRGEAEQPGGGGHGPAPQHTETLGFYESDRR. The residue at position 2 (A2) is an N-acetylalanine. The span at 20–29 shows a compositional bias: basic and acidic residues; sequence GPERTGRGEA. 6 helical membrane passes run 108-128, 154-176, 233-253, 332-352, 400-420, and 429-449; these read LMFF…TLLP, PAQV…MHYV, IGVI…AILI, LWVL…VDIV, GFIP…SIKV, and VILF…VLLG. The interval 464-546 is disordered; it reads LFNPPPASTP…ENSELKHRSS (83 aa). Over residues 473–489 the composition is skewed to low complexity; that stretch reads PGKPSSKSQSKGKPSQG. 2 stretches are compositionally biased toward polar residues: residues 490–505 and 516–525; these read LSTE…SQPG and VTSNSDQFLT. S520 carries the post-translational modification Phosphoserine. At T526 the chain carries Phosphothreonine. Residues 532–546 are compositionally biased toward basic and acidic residues; the sequence is KDITQENSELKHRSS.

This sequence belongs to the TAPT1 family. Ubiquitous. Expressed throughout embryo.

Its subcellular location is the cytoplasm. It localises to the cytoskeleton. The protein resides in the microtubule organizing center. The protein localises to the centrosome. It is found in the cilium basal body. Its subcellular location is the membrane. Plays a role in primary cilia formation. May act as a downstream effector of HOXC8 possibly by transducing or transmitting extracellular information required for axial skeletal patterning during development. May be involved in cartilage and bone development. May play a role in the differentiation of cranial neural crest cells. The sequence is that of Transmembrane anterior posterior transformation protein 1 (Tapt1) from Mus musculus (Mouse).